The sequence spans 41 residues: Photosystem I reaction center subunit IX (41 aa).

A helical membrane pass occupies residues 7–27; it reads YLSTVPVVFAIWLTFTAGLII.

The protein belongs to the PsaJ family.

It localises to the plastid. It is found in the chloroplast thylakoid membrane. Functionally, may help in the organization of the PsaE and PsaF subunits. This chain is Photosystem I reaction center subunit IX, found in Bigelowiella natans (Pedinomonas minutissima).